A 262-amino-acid polypeptide reads, in one-letter code: Shikimate dehydrogenase (NADP(+)) (262 aa).

Shikimate is bound by residues 15 to 17 (SRS) and Thr-62. Catalysis depends on Lys-66, which acts as the Proton acceptor. NADP(+) is bound at residue Glu-78. Positions 87 and 102 each coordinate shikimate. NADP(+)-binding positions include 126-130 (GAGGA), 150-155 (NRTLAR), and Met-214. Tyr-216 contacts shikimate. Gly-236 contacts NADP(+).

It belongs to the shikimate dehydrogenase family. Homodimer.

It carries out the reaction shikimate + NADP(+) = 3-dehydroshikimate + NADPH + H(+). Its pathway is metabolic intermediate biosynthesis; chorismate biosynthesis; chorismate from D-erythrose 4-phosphate and phosphoenolpyruvate: step 4/7. In terms of biological role, involved in the biosynthesis of the chorismate, which leads to the biosynthesis of aromatic amino acids. Catalyzes the reversible NADPH linked reduction of 3-dehydroshikimate (DHSA) to yield shikimate (SA). The polypeptide is Shikimate dehydrogenase (NADP(+)) (Acinetobacter baumannii (strain AB307-0294)).